The following is a 238-amino-acid chain: Androgen-induced gene 1 protein (238 aa).

The Cytoplasmic segment spans residues 1-12 (MALVPCQVLRMA). The helical transmembrane segment at 13 to 30 (ILLSYCSILCNYKAIEMP) threads the bilayer. The Extracellular portion of the chain corresponds to 31–44 (SHQTYGGSWKFLTF). The chain crosses the membrane as a helical span at residues 45–67 (IDLVIQAVFFGICVLTDLSSLLT). At 68–87 (RGSGNQEQERQLKKLISLRD) the chain is on the cytoplasmic side. A helical membrane pass occupies residues 88–110 (WMLAVLAFPVGVFVVAVFWIIYA). Over 111-124 (YDREMIYPKLLDNF) the chain is Extracellular. The chain crosses the membrane as a helical span at residues 125 to 144 (IPGWLNHGMHTTVLPFILIE). Residues 145–156 (MRTSHHQYPSRS) lie on the Cytoplasmic side of the membrane. The chain crosses the membrane as a helical span at residues 157-179 (SGLTAICTFSVGYILWVCWVHHV). Topologically, residues 180–193 (TGMWVYPFLEHIGP) are extracellular. A helical transmembrane segment spans residues 194 to 216 (GARIIFFGSTTILMNFLYLLGEV). Residues 217-238 (LNNYIWDTQKSMEEEKEKPKLE) are Cytoplasmic-facing.

It belongs to the AIG1 family. Highly expressed in heart, ovary, testis, liver, and kidney, at lower levels in spleen, prostate, brain, skeletal muscle, pancreas, small intestine and colon, and undetected in peripheral blood leukocytes, thymus, lung and placenta. AIG1 expression is higher in hair follicles from males than from females.

The protein localises to the cell membrane. The catalysed reaction is 9-hexadecanoyloxy-octadecanoate + H2O = 9-hydroxy-octadecanoate + hexadecanoate + H(+). It carries out the reaction 12-hexadecanoyloxy-octadecanoate + H2O = 12-hydroxyoctadecanoate + hexadecanoate + H(+). The enzyme catalyses 9-(9Z-hexadecenoyloxy)-octadecanoate + H2O = (9Z)-hexadecenoate + 9-hydroxy-octadecanoate + H(+). It catalyses the reaction 12-(9Z-hexadecenoyloxy)-octadecanoate + H2O = 12-hydroxyoctadecanoate + (9Z)-hexadecenoate + H(+). The catalysed reaction is 13-(9Z-hexadecenoyloxy)-octadecanoate + H2O = 13-hydroxy-octadecanoate + (9Z)-hexadecenoate + H(+). It carries out the reaction 9-octadecanoyloxy-octadecanoate + H2O = 9-hydroxy-octadecanoate + octadecanoate + H(+). The enzyme catalyses 12-octadecanoyloxy-octadecanoate + H2O = 12-hydroxyoctadecanoate + octadecanoate + H(+). It catalyses the reaction 13-octadecanoyloxy-octadecanoate + H2O = 13-hydroxy-octadecanoate + octadecanoate + H(+). The catalysed reaction is 9-(9Z-octadecenoyloxy)-octadecanoate + H2O = 9-hydroxy-octadecanoate + (9Z)-octadecenoate + H(+). It carries out the reaction 12-(9Z-octadecenoyloxy)-octadecanoate + H2O = 12-hydroxyoctadecanoate + (9Z)-octadecenoate + H(+). The enzyme catalyses 13-(9Z-octadecenoyloxy)-octadecanoate + H2O = 13-hydroxy-octadecanoate + (9Z)-octadecenoate + H(+). It catalyses the reaction 5-(9Z-hexadecenoyloxy)-octadecanoate + H2O = 5-hydroxy-octadecanoate + (9Z)-hexadecenoate + H(+). Inhibited by N-hydroxyhydantoin carbamate JJH260 and beta-lactone KC01. Functionally, hydrolyzes bioactive fatty-acid esters of hydroxy-fatty acids (FAHFAs), but not other major classes of lipids. Show a preference for FAHFAs with branching distal from the carboxylate head group of the lipids. The chain is Androgen-induced gene 1 protein (AIG1) from Homo sapiens (Human).